The primary structure comprises 518 residues: Coiled-coil domain-containing protein 82 (518 aa).

Residues 1–14 (MVHVRRHETRKNSK) show a composition bias toward basic residues. Residues 1–266 (MVHVRRHETR…EDDYRYDEDG (266 aa)) form a disordered region. The span at 16–27 (QKPEQKSRVDWH) shows a compositional bias: basic and acidic residues. The span at 38-67 (DSDEELDSNEELDSDEEHDSGESIDSDEEL) shows a compositional bias: acidic residues. The segment covering 68–89 (DISKKSDINELPEKETELKLIK) has biased composition (basic and acidic residues). Residues 92–107 (SQGSNSKHLTNTSNSS) show a composition bias toward polar residues. The segment covering 111 to 127 (EQLKETKHNDLPDDEAH) has biased composition (basic and acidic residues). Phosphoserine is present on residues serine 170 and serine 194. The segment covering 191–201 (DECSSLEMEQE) has biased composition (acidic residues). Threonine 202 carries the post-translational modification Phosphothreonine. Residues 204-232 (EKSSAARKREYHQKLQELSERSRQRRRRN) adopt a coiled-coil conformation. The span at 215–225 (HQKLQELSERS) shows a compositional bias: basic and acidic residues. Residues 249 to 266 (GEEDEDEDEDDYRYDEDG) are compositionally biased toward acidic residues. A Phosphoserine modification is found at serine 305.

This is Coiled-coil domain-containing protein 82 (Ccdc82) from Mus musculus (Mouse).